The sequence spans 572 residues: MAKPFFRLQKFLRRTQFLLLFLTAAYLMTGSLLLLQRARVALPQALRAPGSLQALPVATVALGVGLLDSRSLHDPHSSPDLLLDVDTLRSPLARVPPGIRWPRRNRSSLRRRWLHHLTSDPQGPPTLGPEASGPASHNQGNYLGCFSEEGQERTLKGAVFYDLRKMTVSHCQEACAERSYVYAGLEAGAECYCGNRLPATRVSLKECNQECKGEKGSMCGALHRLSVYSVGLQQSGAKKRWTATYRGCFPLPENITRTFSSSMTQANVTVETCSGFCSQKEFPLAILRGWACYCAYPTPQFSLRDAVDGALCSQGTEAQGLPGYCEVYQTPVQDTRCTDRKFLPNKSKVFVALSSFPGAGNTWARHLIEHATGFYTGSYYFDGTLYNKGFKGEKDHWRSRRTICVKTHESGRREIEMFDSAILLIRNPYRSLVAEFNRKCAGHLGYAPDRNWKSKEWPDFVNSYASWWSSHVLDWLKYGKRLLVVHYEELRHSLVPTLREMVAFLNVSVSEERLLCVENNKEGSFRRRGRHPHDQEPFTPEMKDLINGYIRTVDQALRDHNWAGLPREYVPR.

Over 1–14 the chain is Cytoplasmic; sequence MAKPFFRLQKFLRR. Residues 15–35 traverse the membrane as a helical; Signal-anchor for type II membrane protein segment; sequence TQFLLLFLTAAYLMTGSLLLL. Residues 36–572 lie on the Extracellular side of the membrane; that stretch reads QRARVALPQA…AGLPREYVPR (537 aa). N105 carries an N-linked (GlcNAc...) asparagine glycan. Residues 116-135 are disordered; the sequence is HLTSDPQGPPTLGPEASGPA. 2 WSC domains span residues 139–231 and 242–337; these read QGNY…YSVG and TATY…DTRC. N-linked (GlcNAc...) asparagine glycosylation is found at N254 and N345.

This sequence belongs to the WSCD family.

It is found in the golgi apparatus membrane. It catalyses the reaction a ganglioside GM1b + 3'-phosphoadenylyl sulfate = an 8-O-sulfo-ganglioside GM1b + adenosine 3',5'-bisphosphate + H(+). Its function is as follows. Sialate:O-sulfotransferase which catalyzes 8-O-sulfation at the Sia-glycan level using 3'-phosphoadenosine 5'-phosphosulfate (PAPS) as a donor, forming 8-O-sulfated Sia (Sia8S)-glycans. Displays selectivity toward glycolipids such as GM1 gangliosides. The sequence is that of Sialate:O-sulfotransferase 1 (Wscd1) from Rattus norvegicus (Rat).